We begin with the raw amino-acid sequence, 327 residues long: Complex I intermediate-associated protein 30, mitochondrial (327 aa).

Residues 1–24 (MALVHKLLRGTYILRKFSKPASAL) constitute a mitochondrion transit peptide. Positions 42–63 (PVASPGKASSQRKTEGDLQGDH) are disordered. The span at 53–63 (RKTEGDLQGDH) shows a compositional bias: basic and acidic residues. A Phosphoserine modification is found at Ser-318.

This sequence belongs to the CIA30 family. Part of the mitochondrial complex I assembly/MCIA complex that comprises at least the core subunits TMEM126B, NDUFAF1, ECSIT and ACAD9 and complement subunits such as COA1 and TMEM186. Interacts with ECSIT. Interacts with ACAD9. At early stages of complex I assembly, it is found in intermediate subcomplexes that contain different subunits including NDUFB6, NDUFA6, NDUFA9, NDUFS3, NDUFS7, ND1, ND2 and ND3. Interacts with TMEM70 and TMEM242.

The protein localises to the mitochondrion. The protein resides in the mitochondrion matrix. In terms of biological role, as part of the MCIA complex, involved in the assembly of the mitochondrial complex I. The polypeptide is Complex I intermediate-associated protein 30, mitochondrial (Pongo pygmaeus (Bornean orangutan)).